Here is a 504-residue protein sequence, read N- to C-terminus: Patatin-like phospholipase domain-containing protein 2 (504 aa).

Residues 1–8 are Cytoplasmic-facing; that stretch reads MFPREKTW. The chain crosses the membrane as a helical span at residues 9 to 29; that stretch reads NISFAGCGFLGVYYVGVASCL. One can recognise a PNPLA domain in the interval 10 to 179; the sequence is ISFAGCGFLG…SDNLPLYELK (170 aa). Positions 14–19 match the GXGXXG motif; sequence GCGFLG. Residues 30–42 lie on the Extracellular side of the membrane; that stretch reads REHAPFLVANATH. A glycan (N-linked (GlcNAc...) asparagine) is linked at asparagine 39. Residues 43-63 traverse the membrane as a helical segment; sequence IYGASAGALTATALVTGVCLG. The GXSXG motif lies at 45–49; that stretch reads GASAG. Serine 47 functions as the Nucleophile in the catalytic mechanism. Over 64 to 137 the chain is Cytoplasmic; it reads EAGAKFIEVS…IISHFNSKDE (74 aa). Lysine 92 is covalently cross-linked (Glycyl lysine isopeptide (Lys-Gly) (interchain with G-Cter in ubiquitin)). Residues 138–158 form a helical membrane-spanning segment; it reads LIQANVCSGFIPVYCGLIPPS. Over 159–329 the chain is Extracellular; that stretch reads LQGVRYVDGG…TTLSNMLPVR (171 aa). Aspartate 166 functions as the Proton acceptor in the catalytic mechanism. Positions 166-168 match the DGA/G motif; the sequence is DGG. The chain crosses the membrane as a helical span at residues 330-350; that stretch reads LATAMMVPYTLPLESALSFTI. The Cytoplasmic portion of the chain corresponds to 351–504; that stretch reads RLLEWLPDVP…ARPVIGALGL (154 aa). Serine 372 carries the phosphoserine; in vitro modification. At serine 404 the chain carries Phosphoserine; by PKA and FAM20C. Serine 428 carries the phosphoserine modification. A disordered region spans residues 463 to 492; that stretch reads APADPAPAPADPASPQHQLAGPAPLLSTPA.

In terms of assembly, interacts with ABHD5; this association stimulates PNPLA2 triglyceride hydrolase activity. Interacts with SERPINF1; this interaction stimulates the phospholipase A2 activity of PNPLA2. Despite a colocalization in lipid droplets, it probably does not interact with PLIN. Interacts with PLIN5; prevents interaction with ABHD5. Interacts with FAF2. Post-translationally, phosphorylation at Ser-404 by PKA is increased during fasting and moderate intensity exercise, and moderately increases lipolytic activity. Phosphorylation at Ser-404 is increased upon beta-adrenergic stimulation. In terms of processing, ubiquitinated by PEX2 in response to reactive oxygen species (ROS), leading to its degradation. Ubiquitination is stimulated by LDAH. In terms of tissue distribution, highest expression in adipose tissue. Also detected in heart, skeletal muscle, and portions of the gastrointestinal tract. Detected in normal retina and retinoblastoma cells. Detected in retinal pigment epithelium and, at lower intensity, in the inner segments of photoreceptors and in the ganglion cell layer of the neural retina (at protein level).

The protein resides in the lipid droplet. Its subcellular location is the cell membrane. The protein localises to the cytoplasm. It catalyses the reaction a triacylglycerol + H2O = a diacylglycerol + a fatty acid + H(+). The enzyme catalyses a triacylglycerol + H2O = a 1,2-diacylglycerol + a fatty acid + H(+). It carries out the reaction a triacylglycerol + H2O = a 1,3-diacylglycerol + a fatty acid + H(+). The catalysed reaction is a triacyl-sn-glycerol + H2O = a 1,3-diacyl-sn-glycerol + a fatty acid + H(+). It catalyses the reaction a triacyl-sn-glycerol + H2O = a 2,3-diacyl-sn-glycerol + a fatty acid + H(+). The enzyme catalyses a 1-acylglycerol + a 1,3-diacylglycerol = a triacylglycerol + glycerol. It carries out the reaction a 1-acylglycerol + a 1,2-diacylglycerol = a triacylglycerol + glycerol. The catalysed reaction is 2 a 1-acylglycerol = a 1,2-diacylglycerol + glycerol. It catalyses the reaction a triacylglycerol + all-trans-retinol = an all-trans-retinyl ester + a diacylglycerol. The enzyme catalyses 1,2-di-(9Z-octadecenoyl)-glycerol + (9Z)-octadecenoate + H(+) = 1,2,3-tri-(9Z-octadecenoyl)-glycerol + H2O. It carries out the reaction 1,2,3-tri-(9Z-octadecenoyl)-glycerol + H2O = 1,3-di-(9Z-octadecenoyl)-glycerol + (9Z)-octadecenoate + H(+). The catalysed reaction is 1-(9Z-octadecenoyl)-glycerol + 1,3-di-(9Z-octadecenoyl)-glycerol = 1,2,3-tri-(9Z-octadecenoyl)-glycerol + glycerol. It catalyses the reaction 1-(9Z-octadecenoyl)-glycerol + 1,2-di-(9Z-octadecenoyl)-glycerol = 1,2,3-tri-(9Z-octadecenoyl)-glycerol + glycerol. The enzyme catalyses 2 1-(9Z-octadecenoyl)-glycerol = 1,2-di-(9Z-octadecenoyl)-glycerol + glycerol. It carries out the reaction 1,2,3-tri-(9Z-octadecenoyl)-glycerol + all-trans-retinol = all-trans-retinyl 9Z-octadecenoate + di-(9Z)-octadecenoylglycerol. The catalysed reaction is 1,2,3-tri-(9Z)-hexadecenoylglycerol + H2O = 1,3-di-(9Z)-hexadecenoylglycerol + (9Z)-hexadecenoate + H(+). It catalyses the reaction 1,2,3-tri-(9Z,12Z)-octadecadienoylglycerol + H2O = 1,3-di-(9Z,12Z)-octadecadienoylglycerol + (9Z,12Z)-octadecadienoate + H(+). The enzyme catalyses 1,2,3-tri-(9Z,12Z,15Z)-octadecatrienoylglycerol + H2O = 1,3-di-(9Z,12Z,15Z)-octadecatrienoylglycerol + (9Z,12Z,15Z)-octadecatrienoate + H(+). It carries out the reaction 1,3-di-(9Z)-octadecenoyl-2-hexadecanoylglycerol + H2O = 1,3-di-(9Z-octadecenoyl)-glycerol + hexadecanoate + H(+). The catalysed reaction is 1,2-di-(9Z)-octadecenoyl-3-hexadecanoyl-sn-glycerol + H2O = 1-(9Z)-octadecenoyl-3-hexadecanoyl-sn-glycerol + (9Z)-octadecenoate + H(+). It catalyses the reaction 1-hexadecanoyl-2,3-di-(9Z)-octadecenoyl-sn-glycerol + H2O = 1-hexadecanoyl-3-(9Z)-octadecenoyl-sn-glycerol + (9Z)-octadecenoate + H(+). The enzyme catalyses 1,2,3-tri-(9Z-octadecenoyl)-glycerol + H2O = 2,3-di-(9Z)-octadecenoyl-sn-glycerol + (9Z)-octadecenoate + H(+). It carries out the reaction 1,2,3-tri-(9Z)-hexadecenoylglycerol + H2O = 2,3-di-(9Z)-hexadecenoyl-sn-glycerol + (9Z)-hexadecenoate + H(+). The catalysed reaction is 1,2,3-tri-(9Z,12Z)-octadecadienoylglycerol + H2O = 2,3-di-(9Z,12Z)-octadecadienoyl-sn-glycerol + (9Z,12Z)-octadecadienoate + H(+). It catalyses the reaction 1,2,3-tri-(9Z,12Z,15Z)-octadecatrienoylglycerol + H2O = 2,3-di-(9Z,12Z,15Z)-octadecatrienoyl-sn-glycerol + (9Z,12Z,15Z)-octadecatrienoate + H(+). The enzyme catalyses 1,3-di-(9Z)-octadecenoyl-2-hexadecanoylglycerol + H2O = 2-hexadecanoyl-3-(9Z)-octadecenoyl-sn-glycerol + (9Z)-octadecenoate + H(+). It carries out the reaction 1-hexadecanoyl-2,3-di-(9Z)-octadecenoyl-sn-glycerol + H2O = 2,3-di-(9Z)-octadecenoyl-sn-glycerol + hexadecanoate + H(+). The catalysed reaction is 1,2-di-(9Z)-octadecenoyl-3-hexadecanoyl-sn-glycerol + H2O = 2-(9Z-octadecenoyl)-3-hexadecanoyl-sn-glycerol + (9Z)-octadecenoate + H(+). It catalyses the reaction a 1,2-diacyl-sn-glycero-3-phosphocholine + H2O = a 1-acyl-sn-glycero-3-phosphocholine + a fatty acid + H(+). The enzyme catalyses 1,2,3-tri-(9Z-octadecenoyl)-glycerol + 9-hydroxy-octadecanoate = 9-(9Z-octadecenoyloxy)-octadecanoate + 2,3-di-(9Z)-octadecenoyl-sn-glycerol. It carries out the reaction 1-hexadecanoyl-2,3-di-(9Z)-octadecenoyl-sn-glycerol + 9-hydroxy-octadecanoate = 9-hexadecanoyloxy-octadecanoate + 2,3-di-(9Z)-octadecenoyl-sn-glycerol. The catalysed reaction is 1,2,3-tri-(10Z)-heptadecenoylglycerol + 9-hydroxy-octadecanoate = 2,3-di-(10Z-heptadecenoyl)-sn-glycerol + 9-(10Z-heptadecenoyloxy)-octadecanoate. It catalyses the reaction 1,2,3-tri-(9Z,12Z)-octadecadienoylglycerol + 9-hydroxy-octadecanoate = 2,3-di-(9Z,12Z)-octadecadienoyl-sn-glycerol + 9-(9Z,12Z-octadecadienoyloxy)-octadecanoate. The enzyme catalyses 1,2,3-tri-(9Z)-hexadecenoylglycerol + 9-hydroxy-octadecanoate = 2,3-di-(9Z)-hexadecenoyl-sn-glycerol + 9-(9Z-hexadecenoyloxy)-octadecanoate. It carries out the reaction 9-hydroxy-octadecanoate + 1,2-di-(9Z-octadecenoyl)-sn-glycerol = 9-(9Z-octadecenoyloxy)-octadecanoate + 2-(9Z-octadecenoyl)-glycerol. The catalysed reaction is 1-hexadecanoyl-2,3-di-(9Z)-octadecenoyl-sn-glycerol + 9-hydroxy-octadecanoate = 1-hexadecanoyl-3-(9Z)-octadecenoyl-sn-glycerol + 9-(9Z-octadecenoyloxy)-octadecanoate. Its pathway is glycerolipid metabolism; triacylglycerol degradation. With respect to regulation, the triglyceride lipase activity is inhibited by BEL ((E)-6-(bromomethylene)-3-(1-naphthalenyl)-2H-tetrahydropyran-2-one), a suicide substrate inhibitor. No differences in the acylglycerol transacylase was detected in the presence or absence of ATP. In terms of biological role, catalyzes the initial step in triglyceride hydrolysis in adipocyte and non-adipocyte lipid droplets. Exhibits a strong preference for the hydrolysis of long-chain fatty acid esters at the sn-2 position of the glycerol backbone and acts coordinately with LIPE/HLS and DGAT2 within the lipolytic cascade. Also possesses acylglycerol transacylase and phospholipase A2 activities. Transfers fatty acid from triglyceride to retinol, hydrolyzes retinylesters, and generates 1,3-diacylglycerol from triglycerides. Regulates adiposome size and may be involved in the degradation of adiposomes. Catalyzes the formation of an ester bond between hydroxy fatty acids and fatty acids derived from triglycerides or diglycerides to generate fatty acid esters of hydroxy fatty acids (FAHFAs) in adipocytes. Acts antagonistically with LDAH in regulation of cellular lipid stores. Inhibits LDAH-stimulated lipid droplet fusion. May play an important role in energy homeostasis. May play a role in the response of the organism to starvation, enhancing hydrolysis of triglycerides and providing free fatty acids to other tissues to be oxidized in situations of energy depletion. This chain is Patatin-like phospholipase domain-containing protein 2, found in Homo sapiens (Human).